The chain runs to 511 residues: Histidine ammonia-lyase (511 aa).

A cross-link (5-imidazolinone (Ala-Gly)) is located at residues 142–144; the sequence is ASG. Ser-143 carries the post-translational modification 2,3-didehydroalanine (Ser).

It belongs to the PAL/histidase family. Post-translationally, contains an active site 4-methylidene-imidazol-5-one (MIO), which is formed autocatalytically by cyclization and dehydration of residues Ala-Ser-Gly.

It is found in the cytoplasm. It catalyses the reaction L-histidine = trans-urocanate + NH4(+). The protein operates within amino-acid degradation; L-histidine degradation into L-glutamate; N-formimidoyl-L-glutamate from L-histidine: step 1/3. The polypeptide is Histidine ammonia-lyase (Rhizobium rhizogenes (Agrobacterium rhizogenes)).